We begin with the raw amino-acid sequence, 442 residues long: Tubulin beta chain (442 aa).

GTP-binding residues include glutamine 11, glutamate 67, serine 136, glycine 140, threonine 141, glycine 142, and asparagine 202. Glutamate 67 serves as a coordination point for Mg(2+).

This sequence belongs to the tubulin family. In terms of assembly, dimer of alpha and beta chains. A typical microtubule is a hollow water-filled tube with an outer diameter of 25 nm and an inner diameter of 15 nM. Alpha-beta heterodimers associate head-to-tail to form protofilaments running lengthwise along the microtubule wall with the beta-tubulin subunit facing the microtubule plus end conferring a structural polarity. Microtubules usually have 13 protofilaments but different protofilament numbers can be found in some organisms and specialized cells. Mg(2+) is required as a cofactor.

It localises to the cytoplasm. It is found in the cytoskeleton. Functionally, tubulin is the major constituent of microtubules, a cylinder consisting of laterally associated linear protofilaments composed of alpha- and beta-tubulin heterodimers. Microtubules grow by the addition of GTP-tubulin dimers to the microtubule end, where a stabilizing cap forms. Below the cap, tubulin dimers are in GDP-bound state, owing to GTPase activity of alpha-tubulin. The chain is Tubulin beta chain (TUBB) from Euglena gracilis.